The primary structure comprises 342 residues: Phosphoribosylformylglycinamidine cyclo-ligase (342 aa).

The protein belongs to the AIR synthase family.

The protein localises to the cytoplasm. The enzyme catalyses 2-formamido-N(1)-(5-O-phospho-beta-D-ribosyl)acetamidine + ATP = 5-amino-1-(5-phospho-beta-D-ribosyl)imidazole + ADP + phosphate + H(+). It participates in purine metabolism; IMP biosynthesis via de novo pathway; 5-amino-1-(5-phospho-D-ribosyl)imidazole from N(2)-formyl-N(1)-(5-phospho-D-ribosyl)glycinamide: step 2/2. This is Phosphoribosylformylglycinamidine cyclo-ligase from Staphylococcus aureus (strain MSSA476).